The chain runs to 173 residues: Shikimate kinase 1 (173 aa).

ATP is bound at residue 14–19 (GAGKST). Residue Ser-18 coordinates Mg(2+). Asp-36, Arg-60, and Gly-82 together coordinate substrate. An ATP-binding site is contributed by Arg-120. Arg-140 contributes to the substrate binding site. An ATP-binding site is contributed by Gln-157.

This sequence belongs to the shikimate kinase family. As to quaternary structure, monomer. Mg(2+) serves as cofactor.

Its subcellular location is the cytoplasm. It carries out the reaction shikimate + ATP = 3-phosphoshikimate + ADP + H(+). The protein operates within metabolic intermediate biosynthesis; chorismate biosynthesis; chorismate from D-erythrose 4-phosphate and phosphoenolpyruvate: step 5/7. Its function is as follows. Catalyzes the specific phosphorylation of the 3-hydroxyl group of shikimic acid using ATP as a cosubstrate. The sequence is that of Shikimate kinase 1 from Shigella boydii serotype 18 (strain CDC 3083-94 / BS512).